Here is a 660-residue protein sequence, read N- to C-terminus: Translation factor GUF1, mitochondrial (660 aa).

Residues 1–42 (MRSCVRTASSVLQSWRAHTVLRNGCPLPSRTLERLPRLARSY) constitute a mitochondrion transit peptide. Residues 62-242 (ERYRNFCIVA…AVVEKIPAPV (181 aa)) form the tr-type G domain. GTP is bound by residues 71-78 (AHVDHGKS), 135-139 (DTPGH), and 189-192 (NKVD).

Belongs to the TRAFAC class translation factor GTPase superfamily. Classic translation factor GTPase family. LepA subfamily.

It is found in the mitochondrion inner membrane. It catalyses the reaction GTP + H2O = GDP + phosphate + H(+). Functionally, promotes mitochondrial protein synthesis. May act as a fidelity factor of the translation reaction, by catalyzing a one-codon backward translocation of tRNAs on improperly translocated ribosomes. Binds to mitochondrial ribosomes in a GTP-dependent manner. The polypeptide is Translation factor GUF1, mitochondrial (Phaeosphaeria nodorum (strain SN15 / ATCC MYA-4574 / FGSC 10173) (Glume blotch fungus)).